The chain runs to 262 residues: Serine/arginine-rich SC35-like splicing factor SCL30 (262 aa).

Residues 1-14 (MRRYSPPYYSPPRR) are compositionally biased toward low complexity. 2 disordered regions span residues 1–48 (MRRY…SHGS) and 123–262 (ASES…VSPR). Phosphoserine is present on residues S5, S10, and S22. A compositionally biased stretch (gly residues) spans 31-42 (GYGGGGGGGGRR). Residues 47–125 (GSLLVRNIPL…REITVVVASE (79 aa)) form the RRM domain. The span at 125–152 (ESRKRPEEMRVKTRTRSREPSGSRDRSH) shows a compositional bias: basic and acidic residues. The span at 153–167 (GRSRSRSISRSRSPR) shows a compositional bias: basic residues. Residues S182, S204, and S206 each carry the phosphoserine modification. Y209 bears the Phosphotyrosine mark. Basic and acidic residues predominate over residues 217 to 239 (PDRDRNGDNEIREKPGYEAEDRR). A compositionally biased stretch (low complexity) spans 243–262 (RAVSRSPSGSRSRSVEVSPR). Residues S254, S256, and S260 each carry the phosphoserine modification.

This sequence belongs to the splicing factor SR family. SCL subfamily. Component of the spliceosome. Interacts with RS2Z33, CYP59, CYP63 and CYP95. In terms of processing, phosphorylated.

It is found in the nucleus speckle. In terms of biological role, involved in intron recognition and spliceosome assembly. Probably active at the 5' splice sites. This is Serine/arginine-rich SC35-like splicing factor SCL30 (SCL30) from Arabidopsis thaliana (Mouse-ear cress).